We begin with the raw amino-acid sequence, 145 residues long: Large ribosomal subunit protein uL24 (145 aa).

2 disordered regions span residues 1–21 (MKFNPFVTSDRSKNRKRHFNA) and 122–145 (KAKSRQVGKEKGKYKEETIEKMQE). Lys-136 participates in a covalent cross-link: Glycyl lysine isopeptide (Lys-Gly) (interchain with G-Cter in SUMO2). Phosphothreonine is present on Thr-139.

This sequence belongs to the universal ribosomal protein uL24 family. As to quaternary structure, component of the large ribosomal subunit. Interacts with DHX33. Post-translationally, ufmylated by UFL1 in response to endoplasmic reticulum stress, promoting reticulophagy of endoplasmic reticulum sheets.

The protein localises to the cytoplasm. In terms of biological role, component of the large ribosomal subunit. The ribosome is a large ribonucleoprotein complex responsible for the synthesis of proteins in the cell. The protein is Large ribosomal subunit protein uL24 (RPL26) of Bos taurus (Bovine).